Reading from the N-terminus, the 559-residue chain is Membrane protein insertase YidC (559 aa).

Residues 7-24 traverse the membrane as a helical segment; the sequence is ILWVIFSMSLVLLYDNWQ. Low complexity-rich tracts occupy residues 45–55 and 63–82; these read APAASGAAAQG and QPAT…QAAA. The disordered stretch occupies residues 45–82; that stretch reads APAASGAAAQGDVPKANVQPATGTSAAPAAGAAPQAAA. 5 consecutive transmembrane segments (helical) span residues 338-358, 364-384, 434-454, 472-492, and 507-527; these read LELV…FWLL, FLGN…LVFF, LGGC…YWVL, LSVP…MFVQ, and VMMI…AGLV.

The protein belongs to the OXA1/ALB3/YidC family. Type 1 subfamily. As to quaternary structure, interacts with the Sec translocase complex via SecD. Specifically interacts with transmembrane segments of nascent integral membrane proteins during membrane integration.

Its subcellular location is the cell inner membrane. In terms of biological role, required for the insertion and/or proper folding and/or complex formation of integral membrane proteins into the membrane. Involved in integration of membrane proteins that insert both dependently and independently of the Sec translocase complex, as well as at least some lipoproteins. Aids folding of multispanning membrane proteins. The protein is Membrane protein insertase YidC of Cupriavidus taiwanensis (strain DSM 17343 / BCRC 17206 / CCUG 44338 / CIP 107171 / LMG 19424 / R1) (Ralstonia taiwanensis (strain LMG 19424)).